Here is an 865-residue protein sequence, read N- to C-terminus: AdoMet-dependent rRNA methyltransferase SPB1 (865 aa).

Positions 56, 58, 76, 92, and 117 each coordinate S-adenosyl-L-methionine. Lysine 157 serves as the catalytic Proton acceptor. Coiled coils occupy residues 358–400 (ESMD…VRMQ) and 462–492 (GETDDESDEELDRLETELDDMYDQFRERKAA). Disordered stretches follow at residues 370–396 (LEKLKERNSTKKKRERRKENERKQKDI) and 443–676 (VVAS…TKDG). Residues 386 to 396 (RKENERKQKDI) show a composition bias toward basic and acidic residues. The segment covering 463–483 (ETDDESDEELDRLETELDDMY) has biased composition (acidic residues). The span at 484–497 (DQFRERKAASDAKY) shows a compositional bias: basic and acidic residues. The span at 526 to 545 (ISDDSELEEESSGDSDDEDD) shows a compositional bias: acidic residues. Positions 556 to 566 (LDTTPSDNSGL) are enriched in polar residues. A compositionally biased stretch (acidic residues) spans 600–609 (GEDEDADMED). 2 stretches are compositionally biased toward basic and acidic residues: residues 610-627 (TVSKADSKKTKEKTADKK) and 659-676 (KSGKEDDWEDEDKRTKDG). Residues 762–789 (REAKGRKKMKAAQRLEKLKKKSDLLVNE) adopt a coiled-coil conformation.

Belongs to the class I-like SAM-binding methyltransferase superfamily. RNA methyltransferase RlmE family. SPB1 subfamily. As to quaternary structure, component of the nucleolar and nucleoplasmic pre-60S ribosomal particle.

It is found in the nucleus. The protein localises to the nucleolus. The enzyme catalyses a ribonucleotide in rRNA + S-adenosyl-L-methionine = a 2'-O-methylribonucleotide in rRNA + S-adenosyl-L-homocysteine + H(+). Its function is as follows. Required for proper assembly of pre-ribosomal particles during the biogenesis of the 60S ribosomal subunit. This is AdoMet-dependent rRNA methyltransferase SPB1 from Pyricularia oryzae (strain 70-15 / ATCC MYA-4617 / FGSC 8958) (Rice blast fungus).